The primary structure comprises 450 residues: tRNA modification GTPase MnmE (450 aa).

(6S)-5-formyl-5,6,7,8-tetrahydrofolate is bound by residues K21, E78, and K117. One can recognise a TrmE-type G domain in the interval 213–376; the sequence is GHALSIIGKP…LSQKISAFFP (164 aa). N223 is a K(+) binding site. Residues 223–228, 242–248, and 267–270 contribute to the GTP site; these read NAGKSS, SDIKGTT, and DTAG. S227 provides a ligand contact to Mg(2+). K(+) contacts are provided by S242, I244, and T247. T248 serves as a coordination point for Mg(2+). K450 contributes to the (6S)-5-formyl-5,6,7,8-tetrahydrofolate binding site.

It belongs to the TRAFAC class TrmE-Era-EngA-EngB-Septin-like GTPase superfamily. TrmE GTPase family. As to quaternary structure, homodimer. Heterotetramer of two MnmE and two MnmG subunits. K(+) serves as cofactor.

It localises to the cytoplasm. In terms of biological role, exhibits a very high intrinsic GTPase hydrolysis rate. Involved in the addition of a carboxymethylaminomethyl (cmnm) group at the wobble position (U34) of certain tRNAs, forming tRNA-cmnm(5)s(2)U34. The protein is tRNA modification GTPase MnmE of Helicobacter acinonychis (strain Sheeba).